Here is a 469-residue protein sequence, read N- to C-terminus: tRNA-2-methylthio-N(6)-dimethylallyladenosine synthase (469 aa).

Residues 27–142 (KKVYIRTFGC…LPQMLAQRAR (116 aa)) enclose the MTTase N-terminal domain. [4Fe-4S] cluster is bound by residues Cys36, Cys73, Cys105, Cys179, Cys183, and Cys186. Residues 165-398 (KVDGAAAFVS…QATIEDNVRR (234 aa)) form the Radical SAM core domain. The 67-residue stretch at 401 to 467 (ERRVGTVQRV…PHSLRGEPVL (67 aa)) folds into the TRAM domain.

It belongs to the methylthiotransferase family. MiaB subfamily. In terms of assembly, monomer. The cofactor is [4Fe-4S] cluster.

It is found in the cytoplasm. The catalysed reaction is N(6)-dimethylallyladenosine(37) in tRNA + (sulfur carrier)-SH + AH2 + 2 S-adenosyl-L-methionine = 2-methylsulfanyl-N(6)-dimethylallyladenosine(37) in tRNA + (sulfur carrier)-H + 5'-deoxyadenosine + L-methionine + A + S-adenosyl-L-homocysteine + 2 H(+). Functionally, catalyzes the methylthiolation of N6-(dimethylallyl)adenosine (i(6)A), leading to the formation of 2-methylthio-N6-(dimethylallyl)adenosine (ms(2)i(6)A) at position 37 in tRNAs that read codons beginning with uridine. The protein is tRNA-2-methylthio-N(6)-dimethylallyladenosine synthase of Leptothrix cholodnii (strain ATCC 51168 / LMG 8142 / SP-6) (Leptothrix discophora (strain SP-6)).